The chain runs to 299 residues: ATP phosphoribosyltransferase (299 aa).

This sequence belongs to the ATP phosphoribosyltransferase family. Long subfamily. In terms of assembly, equilibrium between an active dimeric form, an inactive hexameric form and higher aggregates. Interconversion between the various forms is largely reversible and is influenced by the natural substrates and inhibitors of the enzyme. Mg(2+) serves as cofactor.

It is found in the cytoplasm. The enzyme catalyses 1-(5-phospho-beta-D-ribosyl)-ATP + diphosphate = 5-phospho-alpha-D-ribose 1-diphosphate + ATP. It participates in amino-acid biosynthesis; L-histidine biosynthesis; L-histidine from 5-phospho-alpha-D-ribose 1-diphosphate: step 1/9. Its activity is regulated as follows. Feedback inhibited by histidine. Catalyzes the condensation of ATP and 5-phosphoribose 1-diphosphate to form N'-(5'-phosphoribosyl)-ATP (PR-ATP). Has a crucial role in the pathway because the rate of histidine biosynthesis seems to be controlled primarily by regulation of HisG enzymatic activity. The polypeptide is ATP phosphoribosyltransferase (Buchnera aphidicola subsp. Diuraphis noxia).